The primary structure comprises 132 residues: uncharacterized protein (132 aa).

A signal peptide spans 1–35 (MSFEYRHYKREAKICTCRGGWAHVLLCIGVSQGAC). The disordered stretch occupies residues 91-132 (AHPGSHSDQPPGVPSRRKSRLERWSPSVSRSTSPPTEAPFCL). Residues 115–125 (SPSVSRSTSPP) are compositionally biased toward low complexity.

The protein localises to the secreted. This is an uncharacterized protein from Homo sapiens (Human).